A 157-amino-acid polypeptide reads, in one-letter code: Transcription elongation factor GreA (157 aa).

A coiled-coil region spans residues 13–75; that stretch reads RARLEAELEE…EIKSILARAQ (63 aa). The disordered stretch occupies residues 113–142; the sequence is EAKPSEGKISNESPIGSALLGKRPRQKVTV.

The protein belongs to the GreA/GreB family.

Its function is as follows. Necessary for efficient RNA polymerase transcription elongation past template-encoded arresting sites. The arresting sites in DNA have the property of trapping a certain fraction of elongating RNA polymerases that pass through, resulting in locked ternary complexes. Cleavage of the nascent transcript by cleavage factors such as GreA or GreB allows the resumption of elongation from the new 3'terminus. GreA releases sequences of 2 to 3 nucleotides. This Roseiflexus sp. (strain RS-1) protein is Transcription elongation factor GreA.